The chain runs to 590 residues: Arginine--tRNA ligase (590 aa).

The 'HIGH' region motif lies at 130 to 140 (ANPTGPMHVGH).

Belongs to the class-I aminoacyl-tRNA synthetase family. As to quaternary structure, monomer.

The protein resides in the cytoplasm. It carries out the reaction tRNA(Arg) + L-arginine + ATP = L-arginyl-tRNA(Arg) + AMP + diphosphate. In Methylobacterium nodulans (strain LMG 21967 / CNCM I-2342 / ORS 2060), this protein is Arginine--tRNA ligase.